We begin with the raw amino-acid sequence, 1119 residues long: MSQSSTRKRLIQWSPHNKSSFIVGSNDLRLYNFKFKDKNEKKNENNINNSNQYNQNNQQQQQQQIQQQQQQQQQQQQQQQQQQQQQQQQQQQQHDIYSPKSITSKYMETYNFDIEYPPDDWVPQEKKTISLMSVNSDVQLMKCMAWCPDESDTNLIACGLTSGRAILTSFSSVNRILKELVPKHTRSCNAISWNPIYTNQLAVGLDKVRGDSSTLIWDINYLQSTTLNNHLHKNNNNYISKLQQQQNNIDQPYIISQISDNSFSTSTDYTDTIYQPISEFTQSEATLALAWLPNNPSCLLVGTGSKWLKLYDIRDVNSSQSVMAHQKSVNGVCVDPFDFNRIATMSEDSHIKVWDLRNLDDPLIIVNSNCKSIQQIDWCPTRSGVLASVGKDKSSIKLWDIKAPIEFSKSPKLESTTLSTGGGGSGSNTSNNLNKRSTSNNNNSQDPINTISKPTKIHHSSDVVSSFSWHPTNECRMLTVSYSGVIDVVSLNENIPISWSPHGGICFSFGNNVLEGPTKGETLEPNILNYKNLINDGRYEKDISSKIKERAIFGYSANVEENINLANKINDENINFLWKWIQKVPIQIQNFKRESSLISTPSISTTTPGGPITPSATTKTIINNNNNNNNNKNINNNINNINNNNNNNNNNNNNNNNNNNNNNNNNNNNNEYNGIYNILIEKDISTVESSNGFVIYKSPNRNLCLSICGWGFNQSLPLENILSRLEKSGEYERAAAIAVFHLDIKRAILVVTNATYNIHPVTQTNHHGHLMRQDREFSLKLLSIALAGFDGSSTSNNNNNNNNNNNNIWKETCKSTAKSFINPYLKTCLEFLASNSDSKDIYSIIEDSRINLDDKIAFSCKYLDYQDLIHFVERNTIRVIECGNLKGVLLTGLTGRGVDLLSNYIDRTCDIQTAVLAISLVVPKFFRDKRVSKWSSIYSDLLDQWELWHERAILDIQTRISGIDQPPTPQIFAKCGFCQNSFAFESISASSIVGRNASSKPNFKAKVPFCPHCKQSLPRCCLCLLPLNCMVPTPEFKKSNTTIGSGGGSIASSGGINNSGSINNPNDSQLWSNGSEPFEDWFTWCQTCRHGGHSQHILDWFKDHSICPVTSCDCRCSQL.

The stretch at 3–43 is one WD 1 repeat; it reads QSSTRKRLIQWSPHNKSSFIVGSNDLRLYNFKFKDKNEKKN. Residues 41-60 are disordered; the sequence is KKNENNINNSNQYNQNNQQQ. A compositionally biased stretch (low complexity) spans 45-60; that stretch reads NNINNSNQYNQNNQQQ. WD repeat units lie at residues 127–169, 183–227, 281–321, 324–364, and 368–409; these read KTIS…ILTS, KHTR…STTL, TQSE…SSQS, AHQK…DPLI, and SNCK…EFSK. The segment at 413–455 is disordered; sequence LESTTLSTGGGGSGSNTSNNLNKRSTSNNNNSQDPINTISKPT. Positions 427-444 are enriched in low complexity; sequence SNTSNNLNKRSTSNNNNS. A WD 7 repeat occupies 459–499; the sequence is HSSDVVSSFSWHPTNECRMLTVSYSGVIDVVSLNENIPISW. Residues 601–669 form a disordered region; it reads PSISTTTPGG…NNNNNNNNNN (69 aa). The C4-type zinc-finger motif lies at 973–1016; it reads AKCGFCQNSFAFESISASSIVGRNASSKPNFKAKVPFCPHCKQS. The Zn(2+) site is built by C975, C978, C1010, C1013, C1023, C1085, C1088, H1090, H1093, H1096, C1107, C1112, and C1116.

The protein belongs to the WD repeat mio family. In terms of assembly, probably part of the GATOR complex.

It localises to the lysosome membrane. Its function is as follows. As a component of the GATOR complex may function in the amino acid-sensing branch of the TORC1 signaling pathway. The protein is GATOR2 complex protein MIOS of Dictyostelium discoideum (Social amoeba).